Here is a 386-residue protein sequence, read N- to C-terminus: Phosphoglycerate kinase (386 aa).

Substrate-binding positions include 21–23 (DLN), R36, 59–62 (HLGR), R113, and R146. ATP is bound by residues K197, E314, and 340-343 (GGDT).

Belongs to the phosphoglycerate kinase family. In terms of assembly, monomer.

It localises to the cytoplasm. It catalyses the reaction (2R)-3-phosphoglycerate + ATP = (2R)-3-phospho-glyceroyl phosphate + ADP. The protein operates within carbohydrate degradation; glycolysis; pyruvate from D-glyceraldehyde 3-phosphate: step 2/5. In Vibrio campbellii (strain ATCC BAA-1116), this protein is Phosphoglycerate kinase.